Consider the following 203-residue polypeptide: Abscisic acid receptor PYL5 (203 aa).

The span at 1 to 18 shows a compositional bias: polar residues; sequence MRSPVQLQHGSDATNGFH. A disordered region spans residues 1–29; it reads MRSPVQLQHGSDATNGFHTLQPHDQTDGP. The segment at 51 to 201 is START-like; it reads HDVGPDQCCS…NLQSLARSTN (151 aa). Residues K87, 117-122, 144-150, and E166 contribute to the abscisate site; these read AVSSTE and RLKNYRS. Positions 113-117 match the Gate loop motif; the sequence is SGLPA. A Latch loop motif is present at residues 143–145; sequence HRL.

Belongs to the PYR/PYL/RCAR abscisic acid intracellular receptor family. As to quaternary structure, monomer. Homodimer. Binds ABA on one subunit only. Binds to CARs protein in an ABA-independent manner, both at the plasma membrane and in the nucleus. Binds both (-)-ABA and (+)-ABA. Interacts with HAB1, ABI1 and ABI2, and possibly with other PP2Cs.

The protein resides in the cytoplasm. The protein localises to the nucleus. Its subcellular location is the cell membrane. In terms of biological role, receptor for abscisic acid (ABA) required for ABA-mediated responses such as stomatal closure and germination inhibition. Inhibits the activity of group-A protein phosphatases type 2C (PP2Cs) in an ABA-independent manner but more efficiently when activated by ABA. Confers enhanced sensitivity to ABA. Can be activated by both (-)-ABA and (+)-ABA. The protein is Abscisic acid receptor PYL5 (PYL5) of Arabidopsis thaliana (Mouse-ear cress).